A 171-amino-acid polypeptide reads, in one-letter code: MGEVSAIVLAASQAAEEGGESSNFLIPNGTFFVVLAIFLVVLAVIGTFVVPPILKVLRERDAMVAKTLADNKKSDEQFAAAQADYDEAMTEARVQASSLRDNARADGRKVIEDARVRAEQQVASTLQTAHEQLKRERDAVELDLRAHVGTMSATLASRILGVDLTASAATR.

A helical membrane pass occupies residues 31–51 (FFVVLAIFLVVLAVIGTFVVP).

It belongs to the ATPase B chain family. As to quaternary structure, F-type ATPases have 2 components, F(1) - the catalytic core - and F(0) - the membrane proton channel. F(1) has five subunits: alpha(3), beta(3), gamma(1), delta(1), epsilon(1). F(0) has three main subunits: a(1), b(2) and c(10-14). The alpha and beta chains form an alternating ring which encloses part of the gamma chain. F(1) is attached to F(0) by a central stalk formed by the gamma and epsilon chains, while a peripheral stalk is formed by the delta and b chains.

It localises to the cell membrane. F(1)F(0) ATP synthase produces ATP from ADP in the presence of a proton or sodium gradient. F-type ATPases consist of two structural domains, F(1) containing the extramembraneous catalytic core and F(0) containing the membrane proton channel, linked together by a central stalk and a peripheral stalk. During catalysis, ATP synthesis in the catalytic domain of F(1) is coupled via a rotary mechanism of the central stalk subunits to proton translocation. In terms of biological role, component of the F(0) channel, it forms part of the peripheral stalk, linking F(1) to F(0). The sequence is that of ATP synthase subunit b from Mycobacterium bovis (strain ATCC BAA-935 / AF2122/97).